A 671-amino-acid polypeptide reads, in one-letter code: RNA polymerase sigma factor RpoD (671 aa).

2 disordered regions span residues 1-45 (MKKK…SKIK) and 229-260 (DDDE…VSEK). Residues 251–260 (EERKKVVSEK) are compositionally biased toward basic and acidic residues. The tract at residues 436-506 (MAKSNLRLVV…SRAIADQART (71 aa)) is sigma-70 factor domain-2. Residues 460 to 463 (DLIQ) carry the Interaction with polymerase core subunit RpoC motif. A sigma-70 factor domain-3 region spans residues 515-591 (DTINRINKVM…DKNIVSSIDH (77 aa)). The tract at residues 604 to 658 (VLDQLNEREKAVIRMRFGLLDDESDRTLEEIGKELNVTRERVRQIESSAIKKLRS) is sigma-70 factor domain-4. A DNA-binding region (H-T-H motif) is located at residues 631 to 650 (LEEIGKELNVTRERVRQIES).

The protein belongs to the sigma-70 factor family. RpoD/SigA subfamily. As to quaternary structure, interacts transiently with the RNA polymerase catalytic core.

The protein localises to the cytoplasm. Its function is as follows. Sigma factors are initiation factors that promote the attachment of RNA polymerase to specific initiation sites and are then released. This sigma factor is the primary sigma factor during exponential growth. The chain is RNA polymerase sigma factor RpoD from Helicobacter pylori (strain ATCC 700392 / 26695) (Campylobacter pylori).